The following is a 284-amino-acid chain: Ribosome-associated protein oga1 (284 aa).

Positions 1-284 (MSVASKNLFD…LSETDFPALA (284 aa)) are disordered. Positions 22–36 (TEKKTAASRDKKRSD) are enriched in basic and acidic residues. Serine 37 and serine 51 each carry phosphoserine. 2 stretches are compositionally biased toward basic and acidic residues: residues 52-73 (RKRD…ADQP) and 119-141 (GREF…ERGW). Residue threonine 160 is modified to Phosphothreonine. At serine 162 the chain carries Phosphoserine. Residue threonine 166 is modified to Phosphothreonine. 2 stretches are compositionally biased toward basic and acidic residues: residues 172 to 186 (ENVK…ERKS) and 194 to 209 (TVEK…KSAP). Residues 214–224 (ASLKKSASQKK) are compositionally biased toward low complexity. Residues 226–237 (AAKESKPKKVLL) show a composition bias toward basic and acidic residues. A compositionally biased stretch (low complexity) spans 245-254 (ARPARGGRPN). Over residues 263 to 277 (ETASKTQQAPPTLSE) the composition is skewed to polar residues.

Belongs to the STM1 family. In terms of assembly, associates with mature 80S ribosomes. Binds to the head domain of the 40S ribosomal subunit and prevents mRNA binding by inserting its alpha-helix domain towards the mRNA entry tunnel at the decoding site, where it blocks the binding of tRNA and mRNA at the A- and P-sites. Interacts with eEF2; interaction sequesters eEF2 at the A-site of the ribosome, thereby blocking the interaction sites of the mRNA-tRNA complex, promoting ribosome stabilization and hibernation. Interacts with sad1. In terms of processing, phosphorylation by TORC1 upon nutrient replenishment inhibits STM1 and causes its release from dormant ribosomes.

The protein resides in the cytoplasm. In terms of biological role, ribosome preservation factor that protect a small pool of nontranslating, vacant ribosomes in cells under nutrient starvation conditions. Under nutrient-limiting conditions, cells reduce ribosome biogenesis and degrade ribosomes via autophagy (ribophagy) or proteasomal degradation. To avoid excessive degradation during starvation, STM1 binds to and protects 80S ribosomes from proteasomal degradation. Under nutrient-sufficient conditions, TORC1 phosphorylates and inhibits STM1 to prevent formation of dormant 80S ribosomes. Acts as an inhibitor of mRNA translation by promoting ribosome hibernation: clamps the two ribosomal subunits, thereby preventing their dissociation, and inhibits translation by excluding mRNA-binding. Acts via its association with eEF2, promoting ribosome stabilization and storage in an inactive state. May also repress translation by preventing association of eEF3 with ribosomes. Binds specifically G4 quadruplex (these are four-stranded right-handed helices, stabilized by guanine base quartets) and purine motif triplex (characterized by a third, antiparallel purine-rich DNA strand located within the major groove of a homopurine stretch of duplex DNA) nucleic acid structures. These structures may be present at telomeres or in rRNAs. Extends chronological lifespan when overexpressed. The sequence is that of Ribosome-associated protein oga1 from Schizosaccharomyces pombe (strain 972 / ATCC 24843) (Fission yeast).